The primary structure comprises 179 residues: Inner membrane-spanning protein YciB (179 aa).

5 consecutive transmembrane segments (helical) span residues 22 to 42 (IYAA…YTWI), 50 to 70 (MALI…FFHN), 76 to 96 (WKVT…QWVM), 121 to 141 (IAWA…AFWM), and 149 to 169 (FKVF…GVYI).

This sequence belongs to the YciB family.

It is found in the cell inner membrane. Plays a role in cell envelope biogenesis, maintenance of cell envelope integrity and membrane homeostasis. This Enterobacter sp. (strain 638) protein is Inner membrane-spanning protein YciB.